The chain runs to 202 residues: Adapter protein MecA 2 (202 aa).

Belongs to the MecA family. Homodimer.

Functionally, enables the recognition and targeting of unfolded and aggregated proteins to the ClpC protease or to other proteins involved in proteolysis. Acts negatively in the development of competence by binding ComK and recruiting it to the ClpCP protease. When overexpressed, inhibits sporulation. Also involved in Spx degradation by ClpC. This Bacillus cereus (strain ATCC 14579 / DSM 31 / CCUG 7414 / JCM 2152 / NBRC 15305 / NCIMB 9373 / NCTC 2599 / NRRL B-3711) protein is Adapter protein MecA 2 (mecA2).